The following is a 254-amino-acid chain: 3-deoxy-manno-octulosonate cytidylyltransferase (254 aa).

This sequence belongs to the KdsB family.

It localises to the cytoplasm. It catalyses the reaction 3-deoxy-alpha-D-manno-oct-2-ulosonate + CTP = CMP-3-deoxy-beta-D-manno-octulosonate + diphosphate. The protein operates within nucleotide-sugar biosynthesis; CMP-3-deoxy-D-manno-octulosonate biosynthesis; CMP-3-deoxy-D-manno-octulosonate from 3-deoxy-D-manno-octulosonate and CTP: step 1/1. It participates in bacterial outer membrane biogenesis; lipopolysaccharide biosynthesis. Its function is as follows. Activates KDO (a required 8-carbon sugar) for incorporation into bacterial lipopolysaccharide in Gram-negative bacteria. In Pseudomonas putida (strain GB-1), this protein is 3-deoxy-manno-octulosonate cytidylyltransferase.